A 1135-amino-acid polypeptide reads, in one-letter code: Envelopment polyprotein (1135 aa).

The signal sequence occupies residues 1–18 (MGIWKWLVMASLVWPVLT). The Lumenal segment spans residues 19 to 485 (LRNVYDMKIE…VPGFHGWATA (467 aa)). 11 cysteine pairs are disulfide-bonded: Cys29-Cys151, Cys63-Cys157, Cys109-Cys128, Cys133-Cys138, Cys175-Cys185, Cys210-Cys247, Cys234-Cys351, Cys376-Cys435, Cys380-Cys389, Cys405-Cys424, and Cys452-Cys475. The N-linked (GlcNAc...) asparagine; by host glycan is linked to Asn134. N-linked (GlcNAc...) asparagine; by host glycans are attached at residues Asn235 and Asn347. N-linked (GlcNAc...) asparagine; by host glycosylation is present at Asn399. Residues 486 to 506 (ALLVTFCFGWVLIPAITFIIL) form a helical membrane-spanning segment. The Cytoplasmic portion of the chain corresponds to 507-627 (TILKFIANIF…LNLFRYKSRC (121 aa)). A binding to the ribonucleoprotein region spans residues 516–533 (FHTSNQENRLKSVLRKIK). CCHC-type zinc fingers lie at residues 545-565 (CDVC…GVSC) and 570-591 (CPYC…YKVC). 3 binding to the ribonucleoprotein regions span residues 588–605 (YKVC…KKTV), 592–603 (QVTHRFRDDLKK), and 611–625 (TPGC…RYKS). One can recognise an ITAM domain in the interval 611-634 (TPGCYRTLNLFRYKSRCYIFTMWI). Positions 615–618 (YRTL) match the YxxL motif. Residues 628–648 (YIFTMWIFLLVLESILWAASA) traverse the membrane as a helical segment. At 649 to 1105 (SETPLTPVWN…EWISGIFSGN (457 aa)) the chain is on the lumenal side. 8 disulfides stabilise this stretch: Cys735–Cys770, Cys739–Cys777, Cys751–Cys885, Cys765–Cys896, Cys780–Cys904, Cys806–Cys815, Cys823–Cys832, and Cys863–Cys867. Residues 757-777 (YQYETSWGCNPSDCPGVGTGC) are fusion loop. Asn928 carries N-linked (GlcNAc...) asparagine; by host glycosylation. 5 disulfides stabilise this stretch: Cys970–Cys1000, Cys993–Cys1045, Cys1010–Cys1015, Cys1046–Cys1051, and Cys1085–Cys1089. The chain crosses the membrane as a helical span at residues 1106–1126 (WIVLIVLCVFLLFSLVLLSIL). The binding to the ribonucleoprotein stretch occupies residues 1122–1135 (LLSILCPVRKHKKS). At 1127 to 1135 (CPVRKHKKS) the chain is on the cytoplasmic side.

It belongs to the hantavirus envelope glycoprotein family. In terms of assembly, homodimer. Homotetramer; forms heterotetrameric Gn-Gc spikes in the pre-fusion conformation. Interacts (via C-terminus) with the nucleoprotein. Interacts with host TUFM; this interaction contributes to the virus-induced degradation of mitochondria by autophagy, which leads to degradation of host MAVS and inhibition of type I interferon (IFN) responses. Interacts with host MAP1LC3B; this interaction contributes to the virus-induced degradation of mitochondria by autophagy, which leads to degradation of host MAVS and inhibition of type I interferon (IFN) responses. Homodimer. Homotetramer; forms heterotetrameric Gn-Gc spikes in the pre-fusion conformation. Homotrimer; forms homotrimer in the post-fusion conformation at acidic pH. Interacts (via C-terminus) with the nucleoprotein. Post-translationally, envelope polyprotein precursor is quickly cleaved in vivo just after synthesis, presumably by host signal peptidase.

The protein resides in the virion membrane. It localises to the host cell surface. Its subcellular location is the host Golgi apparatus membrane. It is found in the host endoplasmic reticulum membrane. The protein localises to the host mitochondrion. In terms of biological role, forms homotetramers with glycoprotein C at the surface of the virion. Attaches the virion to host cell receptors including integrin ITGAV/ITGB3. This attachment induces virion internalization predominantly through clathrin-dependent endocytosis. May also bind to host C1QBP for virus entry into the host cell. Mediates the assembly and budding of infectious virus particles through its interaction with the nucleocapsid protein and the viral genome. May dysregulate normal immune and endothelial cell responses through an ITAM motif. Translocates to mitochondria, binds to host TUFM and recruits MAP1LC3B. These interactions induce mitochondrial autophagy and therefore destruction of host MAVS leading to inhibition of type I interferon (IFN) responses. Concomitant breakdown of glycoprotein N is apparently prevented by the nucleoprotein that may inhibit Gn-stimulated autophagosome-lysosome fusion. Interacts with the viral genomic RNA. Its function is as follows. Forms homotetramers with glycoprotein N at the surface of the virion. Attaches the virion to host cell receptors including integrin ITGAV/ITGB3. This attachment induces virion internalization predominantly through clathrin-dependent endocytosis. May also bind to host C1QBP for virus entry into the host cell. Class II fusion protein that promotes fusion of viral membrane with host endosomal membrane after endocytosis of the virion. The chain is Envelopment polyprotein (GP) from Hantaan virus (strain Lee) (Lee virus).